The primary structure comprises 554 residues: Glutamine--tRNA ligase (554 aa).

Residues 34 to 44 (PEPNGYLHIGH) carry the 'HIGH' region motif. ATP-binding positions include 35–37 (EPN) and 41–47 (HIGHAKS). Residues Asp-67 and Tyr-212 each contribute to the L-glutamine site. ATP is bound by residues Thr-231, 261-262 (RL), and 269-271 (MSK). The short motif at 268-272 (IMSKR) is the 'KMSKS' region element.

It belongs to the class-I aminoacyl-tRNA synthetase family. As to quaternary structure, monomer.

It is found in the cytoplasm. It carries out the reaction tRNA(Gln) + L-glutamine + ATP = L-glutaminyl-tRNA(Gln) + AMP + diphosphate. In Serratia proteamaculans (strain 568), this protein is Glutamine--tRNA ligase.